The chain runs to 367 residues: 3-dehydroquinate synthase (367 aa).

Residues 69-74 (DGEAFK), 103-107 (GVIGD), 127-128 (TT), K140, and K149 each bind NAD(+). Zn(2+) contacts are provided by E182, H245, and H262.

Belongs to the sugar phosphate cyclases superfamily. Dehydroquinate synthase family. Requires NAD(+) as cofactor. It depends on Co(2+) as a cofactor. The cofactor is Zn(2+).

It localises to the cytoplasm. The catalysed reaction is 7-phospho-2-dehydro-3-deoxy-D-arabino-heptonate = 3-dehydroquinate + phosphate. It participates in metabolic intermediate biosynthesis; chorismate biosynthesis; chorismate from D-erythrose 4-phosphate and phosphoenolpyruvate: step 2/7. In terms of biological role, catalyzes the conversion of 3-deoxy-D-arabino-heptulosonate 7-phosphate (DAHP) to dehydroquinate (DHQ). This is 3-dehydroquinate synthase from Pseudomonas syringae pv. tomato (strain ATCC BAA-871 / DC3000).